The following is a 466-amino-acid chain: Cysteine--tRNA ligase (466 aa).

Residue C28 coordinates Zn(2+). The 'HIGH' region signature appears at 30 to 40 (PTVYNYIHIGN). Zn(2+)-binding residues include C208, H233, and E237. The 'KMSKS' region motif lies at 265–269 (KMSKS). K268 contacts ATP.

The protein belongs to the class-I aminoacyl-tRNA synthetase family. In terms of assembly, monomer. Requires Zn(2+) as cofactor.

The protein resides in the cytoplasm. It catalyses the reaction tRNA(Cys) + L-cysteine + ATP = L-cysteinyl-tRNA(Cys) + AMP + diphosphate. This is Cysteine--tRNA ligase from Staphylococcus aureus (strain Mu3 / ATCC 700698).